The following is a 376-amino-acid chain: MYKKILIRYGELVLKGKNRTTFIKQLGSNIKEILNTEYEMEFDRMYIPYSEENLKNLKYVFGISSFSPVIETNKNLEDIQSAITKLINKNASTFKIAARRNDKSFELNSDQLNNLLGGFVLKNSHLKVNVKNPDQIFNIEIRKNSVYVFDKSINGIGGIPVGISGKVLHLISGGFDSPVAAYLLMKRGFKVDFLTFVTPPQTDETTIDKIKNLTKVLSRYQKESNLYVCDFSLISSYIEFTEFKSFKIILMRRSFYRIASELAKQNEILMISNGENLAQVASQTNESMAVIGSSIKNEILRPLLTYDKNEIINLSKVIETHDISILKSKEACELFAPKNPVTKPTEAKTLRIESKLDELKTYEEIVLNQKMKKFAI.

Residues 51 to 152 (EENLKNLKYV…KNSVYVFDKS (102 aa)) enclose the THUMP domain. ATP contacts are provided by residues 170-171 (LI), 195-196 (TF), Arg252, Gly274, and Gln283.

The protein belongs to the ThiI family.

It localises to the cytoplasm. It carries out the reaction [ThiI sulfur-carrier protein]-S-sulfanyl-L-cysteine + a uridine in tRNA + 2 reduced [2Fe-2S]-[ferredoxin] + ATP + H(+) = [ThiI sulfur-carrier protein]-L-cysteine + a 4-thiouridine in tRNA + 2 oxidized [2Fe-2S]-[ferredoxin] + AMP + diphosphate. The catalysed reaction is [ThiS sulfur-carrier protein]-C-terminal Gly-Gly-AMP + S-sulfanyl-L-cysteinyl-[cysteine desulfurase] + AH2 = [ThiS sulfur-carrier protein]-C-terminal-Gly-aminoethanethioate + L-cysteinyl-[cysteine desulfurase] + A + AMP + 2 H(+). The protein operates within cofactor biosynthesis; thiamine diphosphate biosynthesis. Its function is as follows. Catalyzes the ATP-dependent transfer of a sulfur to tRNA to produce 4-thiouridine in position 8 of tRNAs, which functions as a near-UV photosensor. Also catalyzes the transfer of sulfur to the sulfur carrier protein ThiS, forming ThiS-thiocarboxylate. This is a step in the synthesis of thiazole, in the thiamine biosynthesis pathway. The sulfur is donated as persulfide by IscS. This is Probable tRNA sulfurtransferase from Mycoplasmopsis synoviae (strain 53) (Mycoplasma synoviae).